Here is a 129-residue protein sequence, read N- to C-terminus: Follitropin subunit beta (129 aa).

An N-terminal signal peptide occupies residues 1 to 20; that stretch reads MKSVQFCFLFCCWRAICCRS. Cystine bridges form between cysteine 21–cysteine 69, cysteine 35–cysteine 84, cysteine 38–cysteine 122, cysteine 46–cysteine 100, cysteine 50–cysteine 102, and cysteine 105–cysteine 112. Asparagine 25 and asparagine 42 each carry an N-linked (GlcNAc...) asparagine glycan.

It belongs to the glycoprotein hormones subunit beta family. As to quaternary structure, heterodimer. The active follitropin is a heterodimer composed of an alpha chain/CGA shared with other hormones and a unique beta chain/FSHB shown here.

Its subcellular location is the secreted. Together with the alpha chain CGA constitutes follitropin, the follicle-stimulating hormone, and provides its biological specificity to the hormone heterodimer. Binds FSHR, a G protein-coupled receptor, on target cells to activate downstream signaling pathways. Follitropin is involved in follicle development and spermatogenesis in reproductive organs. The chain is Follitropin subunit beta (FSHB) from Bubalus bubalis (Domestic water buffalo).